We begin with the raw amino-acid sequence, 638 residues long: MRSTYKTIGLWVILIVLFVAFYNFFSQGNDQVQEPSFTQLLTKVEEKKVQEVAVKGNTYSGKFTDTSEKFRTTGPAPDAAMLNQLRSNGVDVKYEREEQNSLWLTILGQWMPVVFLFLFFIFFMRQLQGGSGKAMTFGKSKAKLLSESHNKVTFADVAGADECKEELEEIVAFLKDPKKFTKLGGRIPKGVLMMGSPGTGKTLLARAVAGEAGVPFFSISGSDFVEMFVGVGASRVRDLFEQGKKNAPCIIFIDEIDAVGRHRGAGLGGGHDEREQTLNQLLVEMDGFESNDGVILIAATNRPDVLDPALQRPGRFDRRIVVPRPDVKGRLGVLKVHTRRVPLAPEVDLEVIARGTPGMTGADLENLVNESALMAARQNKERVDLSDFEAAKDKVFMGPERRSMIMTEKEKKNTAVHEAGHALLAKLLPGCDPLHKVTIIPRGQALGVTWSLPTEDKVNGYKKQMLDQISMAMGGRIAEELMFNEMSSGAANDIERATETARAMVCRWGMSEKMGPLAFGKSDGEVFLGRDFNSSKDYSEDTARQIDAEVRNIVVGCYERGKNLLTENIEALRRVSDALVEYETLDAEDVNILLQGGQLTRERPPPRVNAPPKATEKKDKRKILDALEGLPAMEPKKA.

Over 1-7 (MRSTYKT) the chain is Cytoplasmic. Residues 8-28 (IGLWVILIVLFVAFYNFFSQG) form a helical membrane-spanning segment. The Periplasmic portion of the chain corresponds to 29–102 (NDQVQEPSFT…KYEREEQNSL (74 aa)). A helical transmembrane segment spans residues 103-123 (WLTILGQWMPVVFLFLFFIFF). Residues 124 to 638 (MRQLQGGSGK…GLPAMEPKKA (515 aa)) are Cytoplasmic-facing. 195 to 202 (GSPGTGKT) is a binding site for ATP. Residue His417 participates in Zn(2+) binding. Glu418 is an active-site residue. 2 residues coordinate Zn(2+): His421 and Asp493. Positions 596 to 638 (GGQLTRERPPPRVNAPPKATEKKDKRKILDALEGLPAMEPKKA) are disordered. Residues 614 to 625 (ATEKKDKRKILD) show a composition bias toward basic and acidic residues.

The protein in the central section; belongs to the AAA ATPase family. In the C-terminal section; belongs to the peptidase M41 family. Homohexamer. Zn(2+) serves as cofactor.

The protein resides in the cell inner membrane. In terms of biological role, acts as a processive, ATP-dependent zinc metallopeptidase for both cytoplasmic and membrane proteins. Plays a role in the quality control of integral membrane proteins. The protein is ATP-dependent zinc metalloprotease FtsH of Myxococcus xanthus (strain DK1622).